The primary structure comprises 165 residues: Large ribosomal subunit protein mL49 (165 aa).

The segment covering 42-75 has biased composition (low complexity); it reads TTATTTTPLQQQQQQQPTTQPTTPIQTQTGAAPT. A disordered region spans residues 42 to 81; that stretch reads TTATTTTPLQQQQQQQPTTQPTTPIQTQTGAAPTESTKPV.

It belongs to the mitochondrion-specific ribosomal protein mL49 family. In terms of assembly, component of the mitochondrial large ribosomal subunit (mt-LSU). Mature N.crassa 74S mitochondrial ribosomes consist of a small (37S) and a large (54S) subunit. The 37S small subunit contains a 16S ribosomal RNA (16S mt-rRNA) and 32 different proteins. The 54S large subunit contains a 23S rRNA (23S mt-rRNA) and 42 different proteins.

Its subcellular location is the mitochondrion. Functionally, component of the mitochondrial ribosome (mitoribosome), a dedicated translation machinery responsible for the synthesis of mitochondrial genome-encoded proteins, including at least some of the essential transmembrane subunits of the mitochondrial respiratory chain. The mitoribosomes are attached to the mitochondrial inner membrane and translation products are cotranslationally integrated into the membrane. This chain is Large ribosomal subunit protein mL49 (img2), found in Neurospora crassa (strain ATCC 24698 / 74-OR23-1A / CBS 708.71 / DSM 1257 / FGSC 987).